A 286-amino-acid polypeptide reads, in one-letter code: Diaminopimelate epimerase (286 aa).

Asn12 and Asn67 together coordinate substrate. Cys76 serves as the catalytic Proton donor. Residues 77-78, Asn165, Asn198, and 216-217 contribute to the substrate site; these read GN and ER. The active-site Proton acceptor is the Cys225. 226 to 227 is a binding site for substrate; that stretch reads GT.

The protein belongs to the diaminopimelate epimerase family. In terms of assembly, homodimer.

The protein localises to the cytoplasm. It catalyses the reaction (2S,6S)-2,6-diaminopimelate = meso-2,6-diaminopimelate. The protein operates within amino-acid biosynthesis; L-lysine biosynthesis via DAP pathway; DL-2,6-diaminopimelate from LL-2,6-diaminopimelate: step 1/1. Functionally, catalyzes the stereoinversion of LL-2,6-diaminopimelate (L,L-DAP) to meso-diaminopimelate (meso-DAP), a precursor of L-lysine. The sequence is that of Diaminopimelate epimerase from Methanothermobacter thermautotrophicus (strain ATCC 29096 / DSM 1053 / JCM 10044 / NBRC 100330 / Delta H) (Methanobacterium thermoautotrophicum).